We begin with the raw amino-acid sequence, 330 residues long: Phosphate acyltransferase (330 aa).

The protein belongs to the PlsX family. In terms of assembly, homodimer. Probably interacts with PlsY.

The protein localises to the cytoplasm. The enzyme catalyses a fatty acyl-[ACP] + phosphate = an acyl phosphate + holo-[ACP]. Its pathway is lipid metabolism; phospholipid metabolism. Its function is as follows. Catalyzes the reversible formation of acyl-phosphate (acyl-PO(4)) from acyl-[acyl-carrier-protein] (acyl-ACP). This enzyme utilizes acyl-ACP as fatty acyl donor, but not acyl-CoA. In Campylobacter hominis (strain ATCC BAA-381 / DSM 21671 / CCUG 45161 / LMG 19568 / NCTC 13146 / CH001A), this protein is Phosphate acyltransferase.